The following is a 160-amino-acid chain: 2-C-methyl-D-erythritol 2,4-cyclodiphosphate synthase (160 aa).

The a divalent metal cation site is built by aspartate 9 and histidine 11. Residues 9–11 and 35–36 contribute to the 4-CDP-2-C-methyl-D-erythritol 2-phosphate site; these read DVH and HS. Histidine 43 contacts a divalent metal cation. 4-CDP-2-C-methyl-D-erythritol 2-phosphate is bound by residues 57–59, 62–66, 101–107, 133–136, phenylalanine 140, and arginine 143; these read DIG, FPDTD, AEAPKMA, and TTSE.

The protein belongs to the IspF family. Homotrimer. The cofactor is a divalent metal cation.

The enzyme catalyses 4-CDP-2-C-methyl-D-erythritol 2-phosphate = 2-C-methyl-D-erythritol 2,4-cyclic diphosphate + CMP. It participates in isoprenoid biosynthesis; isopentenyl diphosphate biosynthesis via DXP pathway; isopentenyl diphosphate from 1-deoxy-D-xylulose 5-phosphate: step 4/6. Functionally, involved in the biosynthesis of isopentenyl diphosphate (IPP) and dimethylallyl diphosphate (DMAPP), two major building blocks of isoprenoid compounds. Catalyzes the conversion of 4-diphosphocytidyl-2-C-methyl-D-erythritol 2-phosphate (CDP-ME2P) to 2-C-methyl-D-erythritol 2,4-cyclodiphosphate (ME-CPP) with a corresponding release of cytidine 5-monophosphate (CMP). The polypeptide is 2-C-methyl-D-erythritol 2,4-cyclodiphosphate synthase (Methylobacillus flagellatus (strain ATCC 51484 / DSM 6875 / VKM B-1610 / KT)).